Consider the following 217-residue polypeptide: Translation initiation factor IF-3 (217 aa).

It belongs to the IF-3 family. In terms of assembly, monomer.

It localises to the cytoplasm. Its function is as follows. IF-3 binds to the 30S ribosomal subunit and shifts the equilibrium between 70S ribosomes and their 50S and 30S subunits in favor of the free subunits, thus enhancing the availability of 30S subunits on which protein synthesis initiation begins. The protein is Translation initiation factor IF-3 of Synechococcus sp. (strain CC9902).